The following is a 287-amino-acid chain: Putative glutamate--cysteine ligase regulatory subunit (287 aa).

This sequence belongs to the aldo/keto reductase family. Glutamate--cysteine ligase light chain subfamily. In terms of assembly, heterodimer of a catalytic heavy chain and a regulatory light chain.

It is found in the cytoplasm. Its pathway is sulfur metabolism; glutathione biosynthesis; glutathione from L-cysteine and L-glutamate: step 1/2. The chain is Putative glutamate--cysteine ligase regulatory subunit from Schizosaccharomyces pombe (strain 972 / ATCC 24843) (Fission yeast).